The following is a 461-amino-acid chain: Putative aldehyde dehydrogenase FUS7 (461 aa).

220–225 serves as a coordination point for NAD(+); sequence GSTATG. Active-site residues include glutamate 242 and cysteine 276.

It belongs to the aldehyde dehydrogenase family.

It carries out the reaction an aldehyde + NAD(+) + H2O = a carboxylate + NADH + 2 H(+). Functionally, putative aldehyde dehydrogenase; part of the gene cluster that mediates the biosynthesis of the mycotoxin fusarin C. Within the cluster, FUS1, FUS2, FUS8 and FUS9 are sufficient for fusarin production. The other FUS cluster members are not essential for fusarin C biosynthesis. The sequence is that of Putative aldehyde dehydrogenase FUS7 from Gibberella moniliformis (strain M3125 / FGSC 7600) (Maize ear and stalk rot fungus).